The following is a 626-amino-acid chain: Phosphomethylpyrimidine synthase (626 aa).

Substrate-binding positions include Asn237, Met266, Tyr295, His331, 351–353 (SRG), 392–395 (DGLR), and Glu431. His435 serves as a coordination point for Zn(2+). Tyr458 provides a ligand contact to substrate. His499 is a binding site for Zn(2+). Residues Cys579, Cys582, and Cys587 each coordinate [4Fe-4S] cluster.

It belongs to the ThiC family. As to quaternary structure, homodimer. [4Fe-4S] cluster is required as a cofactor.

The enzyme catalyses 5-amino-1-(5-phospho-beta-D-ribosyl)imidazole + S-adenosyl-L-methionine = 4-amino-2-methyl-5-(phosphooxymethyl)pyrimidine + CO + 5'-deoxyadenosine + formate + L-methionine + 3 H(+). Its pathway is cofactor biosynthesis; thiamine diphosphate biosynthesis. Its function is as follows. Catalyzes the synthesis of the hydroxymethylpyrimidine phosphate (HMP-P) moiety of thiamine from aminoimidazole ribotide (AIR) in a radical S-adenosyl-L-methionine (SAM)-dependent reaction. The polypeptide is Phosphomethylpyrimidine synthase (Cupriavidus pinatubonensis (strain JMP 134 / LMG 1197) (Cupriavidus necator (strain JMP 134))).